We begin with the raw amino-acid sequence, 185 residues long: Photosystem I assembly protein Ycf4 (185 aa).

The next 2 helical transmembrane spans lie at 24–44 and 66–86; these read YIIG…SISS and IIMG…WYLV.

The protein belongs to the Ycf4 family.

It localises to the cellular thylakoid membrane. Functionally, seems to be required for the assembly of the photosystem I complex. This chain is Photosystem I assembly protein Ycf4, found in Prochlorococcus marinus (strain MIT 9301).